A 239-amino-acid chain; its full sequence is MTKESIPNELLNLLNEEEIIMFRELQIKIQELNYKTNLTRLIEGDDYWISQVYDSLWTFKENTNKNFDNKKFIDIGSGCGFPGFAYAITHPNSEIYLVDSSKKKTDSLKEIIKSIKFKNDIFVINDRIENIGRQSSFKNGFNIATARAVSNPSTVSEYILPMLKSNGLGILYCGKWTNEDNKNLEKTLNVLEGQILEIKSNFLPREKGMRNVIFIEPKASCPDIYPRSIGKAEKYPLKG.

S-adenosyl-L-methionine-binding positions include G76, F81, 99–101, 128–129, and R147; these read DSS and IE.

Belongs to the methyltransferase superfamily. RNA methyltransferase RsmG family.

It is found in the cytoplasm. Specifically methylates the N7 position of a guanine in 16S rRNA. The protein is Ribosomal RNA small subunit methyltransferase G of Prochlorococcus marinus subsp. pastoris (strain CCMP1986 / NIES-2087 / MED4).